Consider the following 125-residue polypeptide: Small ribosomal subunit protein uS13 (125 aa).

A disordered region spans residues 97–125 (PVRGQKTRSNARTRKGPRPSRIKTKKKSS). The span at 101-125 (QKTRSNARTRKGPRPSRIKTKKKSS) shows a compositional bias: basic residues.

This sequence belongs to the universal ribosomal protein uS13 family. Part of the 30S ribosomal subunit. Forms a loose heterodimer with protein S19. Forms two bridges to the 50S subunit in the 70S ribosome.

Its function is as follows. Located at the top of the head of the 30S subunit, it contacts several helices of the 16S rRNA. In the 70S ribosome it contacts the 23S rRNA (bridge B1a) and protein L5 of the 50S subunit (bridge B1b), connecting the 2 subunits; these bridges are implicated in subunit movement. Contacts the tRNAs in the A and P-sites. This chain is Small ribosomal subunit protein uS13, found in Thermotoga maritima (strain ATCC 43589 / DSM 3109 / JCM 10099 / NBRC 100826 / MSB8).